The sequence spans 399 residues: Elongation factor Tu (399 aa).

The region spanning 10-204 (KPHVNIGTIG…AVDASIPEPE (195 aa)) is the tr-type G domain. Residues 19–26 (GHVDHGKT) form a G1 region. 19 to 26 (GHVDHGKT) is a binding site for GTP. Mg(2+) is bound at residue threonine 26. Residues 60-64 (GITIN) form a G2 region. A G3 region spans residues 81-84 (DCPG). GTP contacts are provided by residues 81–85 (DCPGH) and 136–139 (NKCD). Residues 136-139 (NKCD) form a G4 region. The interval 174–176 (SGL) is G5.

It belongs to the TRAFAC class translation factor GTPase superfamily. Classic translation factor GTPase family. EF-Tu/EF-1A subfamily. Monomer.

The protein resides in the cytoplasm. It catalyses the reaction GTP + H2O = GDP + phosphate + H(+). GTP hydrolase that promotes the GTP-dependent binding of aminoacyl-tRNA to the A-site of ribosomes during protein biosynthesis. This Prochlorococcus marinus subsp. pastoris (strain CCMP1986 / NIES-2087 / MED4) protein is Elongation factor Tu.